A 100-amino-acid polypeptide reads, in one-letter code: uncharacterized protein (100 aa).

This is an uncharacterized protein from Acanthamoeba polyphaga mimivirus (APMV).